Reading from the N-terminus, the 195-residue chain is Large ribosomal subunit protein uL5 (195 aa).

It belongs to the universal ribosomal protein uL5 family. Part of the 50S ribosomal subunit; part of the 5S rRNA/L5/L18/L25 subcomplex. Contacts the 5S rRNA and the P site tRNA. Forms a bridge to the 30S subunit in the 70S ribosome.

Functionally, this is one of the proteins that bind and probably mediate the attachment of the 5S RNA into the large ribosomal subunit, where it forms part of the central protuberance. In the 70S ribosome it contacts protein S13 of the 30S subunit (bridge B1b), connecting the 2 subunits; this bridge is implicated in subunit movement. Contacts the P site tRNA; the 5S rRNA and some of its associated proteins might help stabilize positioning of ribosome-bound tRNAs. The protein is Large ribosomal subunit protein uL5 of Pelodictyon phaeoclathratiforme (strain DSM 5477 / BU-1).